Reading from the N-terminus, the 148-residue chain is UPAR/Ly6 domain-containing protein bero (148 aa).

A signal peptide spans 1–23 (MVSALKCSLAVAVMISLACSAYA). 5 cysteine pairs are disulfide-bonded: C26–C72, C29–C37, C51–C90, C102–C116, and C119–C124. A glycan (N-linked (GlcNAc...) asparagine) is linked at N68. N125 carries an N-linked (GlcNAc...) asparagine glycan. Residue N125 is the site of GPI-anchor amidated asparagine attachment. Positions 126-148 (GSSSLAPIAGAILLFFGVARLLA) are cleaved as a propeptide — removed in mature form. A helical transmembrane segment spans residues 128–148 (SSLAPIAGAILLFFGVARLLA).

This sequence belongs to the quiver family.

The protein resides in the cell membrane. Its subcellular location is the membrane. The protein localises to the perikaryon. It localises to the cell projection. It is found in the neuron projection. In terms of biological role, necessary for the maintenance of persistent fluctuating activities and suppression of acute evoked activities in abdominal leucokinin-producing (ABLK) neurons to negatively regulate neuron excitability involved in nociceptive (perception of pain) behavioral responses. The polypeptide is UPAR/Ly6 domain-containing protein bero (Drosophila melanogaster (Fruit fly)).